Reading from the N-terminus, the 500-residue chain is NAD(P)H-quinone oxidoreductase subunit 2, chloroplastic (500 aa).

Transmembrane regions (helical) follow at residues 15–35 (ILPE…DLSL), 42–62 (WIIY…CLQW), 79–99 (FSIA…LLSI), 109–129 (LMEF…LCGA), 132–152 (LITI…LAGY), 167–187 (LLVG…LYGL), 201–221 (LIFA…CIIV), 247–267 (VVAF…IRII), 278–298 (WQFL…LVAI), 306–326 (MLAY…ISST), 334–354 (LVYM…VILF), 377–397 (ASCL…AGFF), and 400–420 (IYLF…VGLL).

This sequence belongs to the complex I subunit 2 family. In terms of assembly, NDH is composed of at least 16 different subunits, 5 of which are encoded in the nucleus.

The protein resides in the plastid. It localises to the chloroplast thylakoid membrane. It catalyses the reaction a plastoquinone + NADH + (n+1) H(+)(in) = a plastoquinol + NAD(+) + n H(+)(out). The enzyme catalyses a plastoquinone + NADPH + (n+1) H(+)(in) = a plastoquinol + NADP(+) + n H(+)(out). NDH shuttles electrons from NAD(P)H:plastoquinone, via FMN and iron-sulfur (Fe-S) centers, to quinones in the photosynthetic chain and possibly in a chloroplast respiratory chain. The immediate electron acceptor for the enzyme in this species is believed to be plastoquinone. Couples the redox reaction to proton translocation, and thus conserves the redox energy in a proton gradient. The protein is NAD(P)H-quinone oxidoreductase subunit 2, chloroplastic of Chaetosphaeridium globosum (Charophycean green alga).